A 222-amino-acid polypeptide reads, in one-letter code: MAEKPLFHYDEARGRMESVRWLLAAAGVEYEEKFIHTNEDLEKLRSDGVLMFQQVPMVEVDGMKLVQTRAIMNYFSSKYNLYGKDMKERALIDMYSEGLADLNEMFILYPFDPPGVKEANIALMKEKATNRYFPAFEKVFESHGQDYLVGNKLSKADVHLVEMIYNMEELDTNILANFPLLQALKTRISDMPTIKKFLQPGSQRQPPVDEKSIQKTRKIFKF.

Positions 3–83 constitute a GST N-terminal domain; it reads EKPLFHYDEA…YFSSKYNLYG (81 aa). Residues Y9, R45, 54–55, and 67–68 each bind glutathione; these read QV and QT. A GST C-terminal domain is found at 85-208; the sequence is DMKERALIDM…QPGSQRQPPV (124 aa).

Belongs to the GST superfamily. Alpha family. In terms of assembly, homodimer or heterodimer of GSTA1 and GSTA2.

Its subcellular location is the cytoplasm. The catalysed reaction is RX + glutathione = an S-substituted glutathione + a halide anion + H(+). Functionally, conjugation of reduced glutathione to a wide number of exogenous and endogenous hydrophobic electrophiles. In Rattus norvegicus (Rat), this protein is Glutathione S-transferase A6 (Gsta6).